Here is a 356-residue protein sequence, read N- to C-terminus: Protein-glutamate methylesterase/protein-glutamine glutaminase 2 (356 aa).

Residues 4–121 form the Response regulatory domain; that stretch reads KVLIVDDSAV…KGFLEESSHE (118 aa). Asp55 carries the post-translational modification 4-aspartylphosphate. The CheB-type methylesterase domain occupies 169–356; sequence FATTERIIAI…LELIAKAICR (188 aa). Residues Ser181, His207, and Asp303 contribute to the active site.

The protein belongs to the CheB family. Post-translationally, phosphorylated by CheA. Phosphorylation of the N-terminal regulatory domain activates the methylesterase activity.

It localises to the cytoplasm. The catalysed reaction is [protein]-L-glutamate 5-O-methyl ester + H2O = L-glutamyl-[protein] + methanol + H(+). It carries out the reaction L-glutaminyl-[protein] + H2O = L-glutamyl-[protein] + NH4(+). Functionally, involved in chemotaxis. Part of a chemotaxis signal transduction system that modulates chemotaxis in response to various stimuli. Catalyzes the demethylation of specific methylglutamate residues introduced into the chemoreceptors (methyl-accepting chemotaxis proteins or MCP) by CheR. Also mediates the irreversible deamidation of specific glutamine residues to glutamic acid. The polypeptide is Protein-glutamate methylesterase/protein-glutamine glutaminase 2 (Chromobacterium violaceum (strain ATCC 12472 / DSM 30191 / JCM 1249 / CCUG 213 / NBRC 12614 / NCIMB 9131 / NCTC 9757 / MK)).